Reading from the N-terminus, the 97-residue chain is Cell division protein FtsL (97 aa).

Over 1–11 (MSRLFVKRLPT) the chain is Cytoplasmic. The chain crosses the membrane as a helical span at residues 12 to 32 (GSFLMLLLYIGLLLSAIAVAY). At 33–97 (STYWNRQLLN…DPAEVRMVAP (65 aa)) the chain is on the periplasmic side.

The protein belongs to the FtsL family. As to quaternary structure, part of a complex composed of FtsB, FtsL and FtsQ.

The protein localises to the cell inner membrane. Its function is as follows. Essential cell division protein. May link together the upstream cell division proteins, which are predominantly cytoplasmic, with the downstream cell division proteins, which are predominantly periplasmic. The sequence is that of Cell division protein FtsL from Pseudomonas aeruginosa (strain ATCC 15692 / DSM 22644 / CIP 104116 / JCM 14847 / LMG 12228 / 1C / PRS 101 / PAO1).